The following is a 237-amino-acid chain: Flagellar L-ring protein (237 aa).

A signal peptide spans 1–16 (MIKRSAVVLMAVILTG). Cysteine 17 is lipidated: N-palmitoyl cysteine. Cysteine 17 carries S-diacylglycerol cysteine lipidation. Residues 122-143 (PPDSSGDMSTDSNSSSDGKGSV) are disordered. The segment covering 124–140 (DSSGDMSTDSNSSSDGK) has biased composition (low complexity).

It belongs to the FlgH family. As to quaternary structure, the basal body constitutes a major portion of the flagellar organelle and consists of four rings (L,P,S, and M) mounted on a central rod.

It localises to the cell outer membrane. The protein resides in the bacterial flagellum basal body. Assembles around the rod to form the L-ring and probably protects the motor/basal body from shearing forces during rotation. The protein is Flagellar L-ring protein of Allorhizobium ampelinum (strain ATCC BAA-846 / DSM 112012 / S4) (Agrobacterium vitis (strain S4)).